We begin with the raw amino-acid sequence, 29 residues long: Beta-theraphotoxin-Gr1b (29 aa).

Disulfide bonds link C2-C16, C9-C21, and C15-C25. L29 carries the leucine amide modification.

It belongs to the neurotoxin 30 (phrixotoxin) family. As to expression, expressed by the venom gland.

The protein resides in the secreted. Functionally, inhibits the voltage-gated sodium channels Nav1.1/SCN1A (IC(50)=360 nM), Nav1.2/SCN2A (IC(50)=600 nM), Nav1.3/SCN3A (IC(50)=1280), Nav1.4/SCN4A (IC(50)=330 nM), Nav1.6/SCN8A (IC(50)=1200 nM), Nav1.7/SCN9A (IC(50)=1-40 nM), and voltage-gated potassium channels Kv11.1/KCNH2 (IC(50)=4.8 uM). Induces analgesia in mammals. This analgesia is mediated by a non-opioid receptor related mechanism. This is Beta-theraphotoxin-Gr1b from Grammostola rosea (Chilean rose tarantula).